Reading from the N-terminus, the 340-residue chain is Protein RecA (340 aa).

ATP is bound at residue 65–72 (GPESGGKT).

It belongs to the RecA family.

Its subcellular location is the cytoplasm. In terms of biological role, can catalyze the hydrolysis of ATP in the presence of single-stranded DNA, the ATP-dependent uptake of single-stranded DNA by duplex DNA, and the ATP-dependent hybridization of homologous single-stranded DNAs. It interacts with LexA causing its activation and leading to its autocatalytic cleavage. This chain is Protein RecA, found in Thermus thermophilus.